The following is a 113-amino-acid chain: Large ribosomal subunit protein uL22 (113 aa).

This sequence belongs to the universal ribosomal protein uL22 family. In terms of assembly, part of the 50S ribosomal subunit.

Its function is as follows. This protein binds specifically to 23S rRNA; its binding is stimulated by other ribosomal proteins, e.g. L4, L17, and L20. It is important during the early stages of 50S assembly. It makes multiple contacts with different domains of the 23S rRNA in the assembled 50S subunit and ribosome. Functionally, the globular domain of the protein is located near the polypeptide exit tunnel on the outside of the subunit, while an extended beta-hairpin is found that lines the wall of the exit tunnel in the center of the 70S ribosome. This chain is Large ribosomal subunit protein uL22, found in Herpetosiphon aurantiacus (strain ATCC 23779 / DSM 785 / 114-95).